Consider the following 137-residue polypeptide: NTF2-related export protein (137 aa).

The 117-residue stretch at Glu-19 to Tyr-135 folds into the NTF2 domain.

Preferentially binds Ran-GTP.

The protein localises to the nucleus. In terms of biological role, stimulator of protein export for NES-containing proteins. Also plays a role in the nuclear export of U1 snRNA, tRNA, and mRNA. The polypeptide is NTF2-related export protein (nxt-1) (Caenorhabditis elegans).